Here is a 147-residue protein sequence, read N- to C-terminus: Hemoglobin subunit gamma-2 (147 aa).

One can recognise a Globin domain in the interval 3–147 (HFTEEDKATI…VASALSSRYH (145 aa)). Position 13 is a phosphothreonine (T13). Phosphoserine occurs at positions 45, 51, and 53. Residue K60 is modified to N6-acetyllysine. Residue H64 participates in heme b binding. Position 83 is an N6-acetyllysine (K83). H93 provides a ligand contact to heme b. An S-nitrosocysteine modification is found at C94. Phosphoserine is present on residues S140, S143, and S144.

Belongs to the globin family. In terms of assembly, heterotetramer of two alpha chains and two gamma chains in fetal hemoglobin (Hb F). Red blood cells.

In terms of biological role, gamma chains make up the fetal hemoglobin F, in combination with alpha chains. The sequence is that of Hemoglobin subunit gamma-2 (HBG2) from Pongo pygmaeus (Bornean orangutan).